The chain runs to 376 residues: MKILVDENMPFVEPLFGDLGEIIPVNGRTLTVAQVRDADVLLVRSVTKVNAELLSDNHQLKFVGSATIGTDHVDLAYLGERNIPFSNAPGCNATAVGEFAFIAMLELAQRFDSPLKGKVVGIVGAGNTGTATAKCLQAYGIKVLLNDPIKEKQGDPRSFVSLETIMAQADIISLHVPITRTGEHKTKHLLDEARLTALKPNTWLVNCCRGDVIDNKALVRVKRQRDDLRLVLDVWEGEPTPMPELVPLAEFATPHIAGYSLEGKARGTFMLYQKLCQLLNIAADKSLLDLLPSFNIKAVELATAPDEKALLQLARFVYDLRDDDNMFRNIFLNENGFDTMRKNHRHRREFSALALAYDRQLEVDWLSNLGFSGVGQ.

The substrate site is built by serine 45 and threonine 67. An NAD(+)-binding site is contributed by aspartate 147. Arginine 209 is an active-site residue. Aspartate 233 contacts NAD(+). Glutamate 238 is an active-site residue. Histidine 255 serves as the catalytic Proton donor. Glycine 258 is a binding site for NAD(+). Residue tyrosine 259 coordinates substrate.

Belongs to the D-isomer specific 2-hydroxyacid dehydrogenase family. PdxB subfamily. As to quaternary structure, homodimer.

It is found in the cytoplasm. The enzyme catalyses 4-phospho-D-erythronate + NAD(+) = (R)-3-hydroxy-2-oxo-4-phosphooxybutanoate + NADH + H(+). It functions in the pathway cofactor biosynthesis; pyridoxine 5'-phosphate biosynthesis; pyridoxine 5'-phosphate from D-erythrose 4-phosphate: step 2/5. Functionally, catalyzes the oxidation of erythronate-4-phosphate to 3-hydroxy-2-oxo-4-phosphonooxybutanoate. The chain is Erythronate-4-phosphate dehydrogenase from Shewanella sp. (strain W3-18-1).